Consider the following 294-residue polypeptide: Cytidine deaminase (294 aa).

2 consecutive CMP/dCMP-type deaminase domains span residues 48–168 and 186–294; these read DEDA…FGPK and LTGD…VLLG. Residue 89-91 coordinates substrate; that stretch reads NME. Zn(2+) is bound at residue histidine 102. Residue glutamate 104 is the Proton donor of the active site. Positions 129 and 132 each coordinate Zn(2+).

It belongs to the cytidine and deoxycytidylate deaminase family. In terms of assembly, homodimer. The cofactor is Zn(2+).

The enzyme catalyses cytidine + H2O + H(+) = uridine + NH4(+). The catalysed reaction is 2'-deoxycytidine + H2O + H(+) = 2'-deoxyuridine + NH4(+). Functionally, this enzyme scavenges exogenous and endogenous cytidine and 2'-deoxycytidine for UMP synthesis. This is Cytidine deaminase from Salmonella arizonae (strain ATCC BAA-731 / CDC346-86 / RSK2980).